A 129-amino-acid chain; its full sequence is Protein Turandot A (129 aa).

An N-terminal signal peptide occupies residues 1-21 (MNSLTGFMCCALLLISPLCMG). N-linked (GlcNAc...) asparagine glycosylation occurs at N49.

This sequence belongs to the Turandot family.

Its subcellular location is the secreted. A humoral factor that plays a role in stress tolerance; gives increased resistance to the lethal effects of bacterial challenge and stress. Regulated by the JAK/STAT pathway and NF-KB-like Relish pathway in the fat body, upd3 in the hemocytes and Mekk1 in response to septic injury and consequent immune response. This chain is Protein Turandot A (TotA), found in Drosophila yakuba (Fruit fly).